We begin with the raw amino-acid sequence, 522 residues long: 2-isopropylmalate synthase (522 aa).

A Pyruvate carboxyltransferase domain is found at 5-267 (VIIFDTTLRD…ETGINAKEIH (263 aa)). Mn(2+) is bound by residues Asp14, His202, His204, and Asn238. The interval 392 to 522 (QLQQLVVQSD…MHKNRELGGV (131 aa)) is regulatory domain.

It belongs to the alpha-IPM synthase/homocitrate synthase family. LeuA type 1 subfamily. In terms of assembly, homodimer. Mn(2+) serves as cofactor.

The protein localises to the cytoplasm. It catalyses the reaction 3-methyl-2-oxobutanoate + acetyl-CoA + H2O = (2S)-2-isopropylmalate + CoA + H(+). It functions in the pathway amino-acid biosynthesis; L-leucine biosynthesis; L-leucine from 3-methyl-2-oxobutanoate: step 1/4. Catalyzes the condensation of the acetyl group of acetyl-CoA with 3-methyl-2-oxobutanoate (2-ketoisovalerate) to form 3-carboxy-3-hydroxy-4-methylpentanoate (2-isopropylmalate). The chain is 2-isopropylmalate synthase from Shewanella sp. (strain ANA-3).